Reading from the N-terminus, the 297-residue chain is Homoserine kinase (297 aa).

An ATP-binding site is contributed by 82 to 92; that stretch reads PLTRGLGSSAS.

The protein belongs to the GHMP kinase family. Homoserine kinase subfamily.

Its subcellular location is the cytoplasm. It carries out the reaction L-homoserine + ATP = O-phospho-L-homoserine + ADP + H(+). The protein operates within amino-acid biosynthesis; L-threonine biosynthesis; L-threonine from L-aspartate: step 4/5. Its function is as follows. Catalyzes the ATP-dependent phosphorylation of L-homoserine to L-homoserine phosphate. This Bacillus cereus (strain B4264) protein is Homoserine kinase.